The sequence spans 426 residues: Dihydroorotase (426 aa).

Zn(2+) is bound by residues histidine 58 and histidine 60. Substrate is bound by residues 60–62 and asparagine 92; that span reads HLR. The Zn(2+) site is built by aspartate 150, histidine 177, and histidine 230. Residue asparagine 276 coordinates substrate. Aspartate 303 provides a ligand contact to Zn(2+). Aspartate 303 is a catalytic residue. Residues histidine 307 and 321 to 322 contribute to the substrate site; that span reads FG.

It belongs to the metallo-dependent hydrolases superfamily. DHOase family. Class I DHOase subfamily. Requires Zn(2+) as cofactor.

It carries out the reaction (S)-dihydroorotate + H2O = N-carbamoyl-L-aspartate + H(+). Its pathway is pyrimidine metabolism; UMP biosynthesis via de novo pathway; (S)-dihydroorotate from bicarbonate: step 3/3. Functionally, catalyzes the reversible cyclization of carbamoyl aspartate to dihydroorotate. The protein is Dihydroorotase of Listeria innocua serovar 6a (strain ATCC BAA-680 / CLIP 11262).